Reading from the N-terminus, the 94-residue chain is Small ribosomal subunit protein uS19 (94 aa).

It belongs to the universal ribosomal protein uS19 family.

Its function is as follows. Protein S19 forms a complex with S13 that binds strongly to the 16S ribosomal RNA. The protein is Small ribosomal subunit protein uS19 of Elusimicrobium minutum (strain Pei191).